The sequence spans 281 residues: Pantothenate synthetase (281 aa).

Position 30–37 (30–37) interacts with ATP; that stretch reads MGYLHDGH. H37 functions as the Proton donor in the catalytic mechanism. Residue Q61 coordinates (R)-pantoate. Q61 provides a ligand contact to beta-alanine. 147-150 serves as a coordination point for ATP; the sequence is GEKD. Q153 is a (R)-pantoate binding site. ATP is bound by residues I176 and 184–187; that span reads KSSR.

It belongs to the pantothenate synthetase family. As to quaternary structure, homodimer.

The protein localises to the cytoplasm. It catalyses the reaction (R)-pantoate + beta-alanine + ATP = (R)-pantothenate + AMP + diphosphate + H(+). It functions in the pathway cofactor biosynthesis; (R)-pantothenate biosynthesis; (R)-pantothenate from (R)-pantoate and beta-alanine: step 1/1. Its function is as follows. Catalyzes the condensation of pantoate with beta-alanine in an ATP-dependent reaction via a pantoyl-adenylate intermediate. This chain is Pantothenate synthetase, found in Clostridium acetobutylicum (strain ATCC 824 / DSM 792 / JCM 1419 / IAM 19013 / LMG 5710 / NBRC 13948 / NRRL B-527 / VKM B-1787 / 2291 / W).